Consider the following 118-residue polypeptide: uncharacterized protein (118 aa).

The first 22 residues, Met-1–Ala-22, serve as a signal peptide directing secretion. The stretch at Thr-41–Ser-71 forms a coiled coil.

This is an uncharacterized protein from Schizosaccharomyces pombe (strain 972 / ATCC 24843) (Fission yeast).